A 164-amino-acid chain; its full sequence is CB1 cannabinoid receptor-interacting protein 1 (164 aa).

The protein belongs to the CNRIP family. Interacts with the cannabinoid receptor CNR1 (via C-terminus). Does not interact with cannabinoid receptor CNR2. Highly expressed in brain. Also detected in heart, lung, intestine, kidney, testis, spleen, liver and muscle (at protein level).

Its function is as follows. Suppresses cannabinoid receptor CNR1-mediated tonic inhibition of voltage-gated calcium channels. This Mus musculus (Mouse) protein is CB1 cannabinoid receptor-interacting protein 1 (Cnrip1).